Consider the following 117-residue polypeptide: MRSLLFVVGAWVAAAVTHLTPNAALATGTTPTVGANSTADPGTGANGTTVPAAGTPANSTTAAETPAPFPPVDFALPVVIGGLCALTLAAMGAGALLHRCCRRAAARRRQRAAYVYA.

An N-terminal signal peptide occupies residues 1 to 26 (MRSLLFVVGAWVAAAVTHLTPNAALA). Residues 26-64 (ATGTTPTVGANSTADPGTGANGTTVPAAGTPANSTTAAE) are disordered. Residues 27–40 (TGTTPTVGANSTAD) show a composition bias toward polar residues. Residues 27-73 (TGTTPTVGANSTADPGTGANGTTVPAAGTPANSTTAAETPAPFPPVD) lie on the Extracellular side of the membrane. Asn-36, Asn-46, and Asn-58 each carry an N-linked (GlcNAc...) asparagine; by host glycan. The helical transmembrane segment at 74-94 (FALPVVIGGLCALTLAAMGAG) threads the bilayer. The Cytoplasmic portion of the chain corresponds to 95 to 117 (ALLHRCCRRAAARRRQRAAYVYA).

This sequence belongs to the alphaherpesvirinae glycoprotein J family.

The protein resides in the host Golgi apparatus membrane. It localises to the host endoplasmic reticulum membrane. It is found in the host endosome membrane. In terms of biological role, inhibits host cell apoptosis. Induces an increase in reactive oxygen species (ROS) in the host cell. The chain is Envelope glycoprotein J (gJ) from Homo sapiens (Human).